Reading from the N-terminus, the 330-residue chain is Malate dehydrogenase (330 aa).

12 to 18 (GAAGQIG) serves as a coordination point for NAD(+). Substrate is bound by residues arginine 93 and arginine 99. NAD(+) contacts are provided by residues asparagine 106, glutamine 113, and 130–132 (VGN). Positions 132 and 163 each coordinate substrate. Histidine 188 functions as the Proton acceptor in the catalytic mechanism.

This sequence belongs to the LDH/MDH superfamily. MDH type 2 family.

It catalyses the reaction (S)-malate + NAD(+) = oxaloacetate + NADH + H(+). Catalyzes the reversible oxidation of malate to oxaloacetate. The sequence is that of Malate dehydrogenase from Thermobifida fusca (strain YX).